The following is a 46-amino-acid chain: Iota-conotoxin-like M11.1 (46 aa).

Disulfide bonds link Cys5–Cys19, Cys12–Cys22, Cys18–Cys27, and Cys21–Cys38. At Met44 the chain carries D-methionine. Residue Arg46 is a propeptide, removed by a carboxypeptidase.

This sequence belongs to the conotoxin I1 superfamily. Expressed by the venom duct.

It localises to the secreted. Its function is as follows. Iota-conotoxins bind to voltage-gated sodium channels (Nav) and act as agonists by shifting the voltage-dependence of activation to more hyperpolarized levels. Produces general excitatory symptoms. The sequence is that of Iota-conotoxin-like M11.1 from Conus magus (Magical cone).